The primary structure comprises 132 residues: Small ribosomal subunit protein uS11 (132 aa).

Belongs to the universal ribosomal protein uS11 family. As to quaternary structure, part of the 30S ribosomal subunit.

Located on the platform of the 30S subunit. This is Small ribosomal subunit protein uS11 from Sulfurisphaera tokodaii (strain DSM 16993 / JCM 10545 / NBRC 100140 / 7) (Sulfolobus tokodaii).